A 577-amino-acid polypeptide reads, in one-letter code: MSSTPTAEELALQNTVSQSASAHPELYHTVSHASNNSYQLPQLSRSATSNFSTSARFAARYPTTAGESFQNLTPVNSNPSNQNSKTEPNPDDVEKCIQDPLLQVFPVVEEPERFVFSIDPKSPLIAVNWPFKRKLKTTCILAYVALCSSFASSVFAVPAEAITTVFHISLTVSLLTMTVFLLGYCSGPIIWAPLSELSGRKPPILIGMLGFGIFNISVAVGKDIQTIMMCRFFAGFFASAPLTVVAAALADMYSNKYRGTAITLFSAMVFDGPLVSPIVGGFLTKSYLGWRWTEYITSFMGFFALIIVYLFCDETYSKAIIQGKAKEYRAITGNYFVHAKSEEEVLTLSDIAKNYLLVPMKLLFTEPICFLITLYSSFVYAILYLLLEAYPIIFGEKRHFSMGVAELPYIGLLVGVFIGSGINIAFEPWYYRKCLAQGGKPDPEARLPPMMIGCFMFPAGIFWLSWSGHYSYVNWVVPALSGLATGCGILLIFLQCINYLIDAYLFRAASAIAANTIMRSAMAAGFPLFAVQMFHNMGVGWAGSLLGFIATALIPMPFVFFFFGRKIRRMSKMAVDF.

Polar residues-rich tracts occupy residues 1–21 and 68–87; these read MSST…QSAS and SFQN…SKTE. Disordered regions lie at residues 1-24 and 68-93; these read MSST…SAHP and SFQN…PDDV. Transmembrane regions (helical) follow at residues 139–159, 174–194, 204–224, 232–252, 262–282, 292–312, 367–387, 402–422, 447–467, 473–493, 504–526, and 543–563; these read CILA…AVPA, LLTM…WAPL, ILIG…GKDI, FFAG…LADM, ITLF…VGGF, WTEY…YLFC, PICF…YLLL, MGVA…GSGI, LPPM…LSWS, VNWV…LLIF, YLFR…AAGF, and GSLL…FFFF.

The protein belongs to the major facilitator superfamily. CAR1 family.

Its subcellular location is the endoplasmic reticulum. The protein resides in the membrane. This is an uncharacterized protein from Schizosaccharomyces pombe (strain 972 / ATCC 24843) (Fission yeast).